Consider the following 437-residue polypeptide: Glucose-1-phosphate adenylyltransferase (437 aa).

Alpha-D-glucose 1-phosphate-binding positions include Tyr113, Gly179, 194 to 195, and Ser212; that span reads EK.

It belongs to the bacterial/plant glucose-1-phosphate adenylyltransferase family. In terms of assembly, homotetramer.

It carries out the reaction alpha-D-glucose 1-phosphate + ATP + H(+) = ADP-alpha-D-glucose + diphosphate. The protein operates within glycan biosynthesis; glycogen biosynthesis. In terms of biological role, involved in the biosynthesis of ADP-glucose, a building block required for the elongation reactions to produce glycogen. Catalyzes the reaction between ATP and alpha-D-glucose 1-phosphate (G1P) to produce pyrophosphate and ADP-Glc. This chain is Glucose-1-phosphate adenylyltransferase, found in Haemophilus influenzae (strain 86-028NP).